The primary structure comprises 279 residues: DegV domain-containing protein SACOL1460 (279 aa).

The DegV domain occupies 4 to 278 (QIIVTDSTSD…QGAIGLVVLK (275 aa)). Residues T61 and S93 each contribute to the hexadecanoate site.

Functionally, may bind long-chain fatty acids, such as palmitate, and may play a role in lipid transport or fatty acid metabolism. The chain is DegV domain-containing protein SACOL1460 from Staphylococcus aureus (strain COL).